The chain runs to 302 residues: Ribose-5-phosphate isomerase (302 aa).

It belongs to the ribose 5-phosphate isomerase family.

The protein localises to the cytoplasm. The enzyme catalyses aldehydo-D-ribose 5-phosphate = D-ribulose 5-phosphate. It functions in the pathway carbohydrate degradation; pentose phosphate pathway; D-ribose 5-phosphate from D-ribulose 5-phosphate (non-oxidative stage): step 1/1. In Cryptococcus neoformans var. neoformans serotype D (strain B-3501A) (Filobasidiella neoformans), this protein is Ribose-5-phosphate isomerase (RKI1).